Here is a 316-residue protein sequence, read N- to C-terminus: MSFSAKVKGEICRYIDISKEEALAQISAIMKVCGTLAFSGRQISFKMTTENPASARLMFTILKDYFDIHAKLMVKKSNSLKKNNIYMVVVTEEMGVKKLLEVTGILREIDGIMSLDYHIDENLVDTEEKKKAYIRGAFIGGGSISNPEKTYHLEFVTHSQEYAEDLGKLINTFGLKAKVIQRKNSYIVYIKEGEQIVDLLNIIGAHTALLELENIRIMKEMRNNVNRLVNCETANLSKTVNAAVRQVESIKLIEREIGLARLPKNLREVAELRLTYPEESLKELGEMLEPPVGKSGVNHRLRKIEKIAEELRTGNF.

A DNA-binding region (H-T-H motif) is located at residues 280–313 (SLKELGEMLEPPVGKSGVNHRLRKIEKIAEELRT).

It belongs to the WhiA family.

In terms of biological role, involved in cell division and chromosome segregation. This is Probable cell division protein WhiA from Clostridium perfringens (strain 13 / Type A).